Consider the following 189-residue polypeptide: 7-methyl-GTP pyrophosphatase (189 aa).

The active-site Proton acceptor is the Asp71.

This sequence belongs to the Maf family. YceF subfamily. Requires a divalent metal cation as cofactor.

The protein localises to the cytoplasm. It catalyses the reaction N(7)-methyl-GTP + H2O = N(7)-methyl-GMP + diphosphate + H(+). Nucleoside triphosphate pyrophosphatase that hydrolyzes 7-methyl-GTP (m(7)GTP). May have a dual role in cell division arrest and in preventing the incorporation of modified nucleotides into cellular nucleic acids. The sequence is that of 7-methyl-GTP pyrophosphatase from Bdellovibrio bacteriovorus (strain ATCC 15356 / DSM 50701 / NCIMB 9529 / HD100).